A 254-amino-acid chain; its full sequence is DNA repair protein RecO (254 aa).

Belongs to the RecO family.

In terms of biological role, involved in DNA repair and RecF pathway recombination. This chain is DNA repair protein RecO, found in Rhodopseudomonas palustris (strain BisB18).